Reading from the N-terminus, the 58-residue chain is Small ribosomal subunit protein bS21 (58 aa).

It belongs to the bacterial ribosomal protein bS21 family.

This is Small ribosomal subunit protein bS21 from Prochlorococcus marinus (strain MIT 9301).